Consider the following 193-residue polypeptide: LOB domain-containing protein 12 (193 aa).

The LOB domain maps to 7-108 (SPCASCKLLR…MQLAVAQAEI (102 aa)).

Belongs to the LOB domain-containing protein family. As to expression, expressed predominantly in roots, and at low levels in shoots, floral stems and open flowers.

This chain is LOB domain-containing protein 12 (LBD12), found in Arabidopsis thaliana (Mouse-ear cress).